Here is a 487-residue protein sequence, read N- to C-terminus: Probable cytochrome P450 513B1 (487 aa).

The helical transmembrane segment at 1-18 (MNLLVLSVILAIIIYLIF) threads the bilayer. Cys433 contributes to the heme binding site.

This sequence belongs to the cytochrome P450 family. Heme is required as a cofactor.

The protein resides in the membrane. This chain is Probable cytochrome P450 513B1 (cyp513B1), found in Dictyostelium discoideum (Social amoeba).